The sequence spans 567 residues: UPF0313 protein CTN_0332 (567 aa).

In terms of domain architecture, Radical SAM core spans 288-560 (KAIETVKFSI…NKMKENVLFK (273 aa)). Cys-303, Cys-307, and Cys-310 together coordinate [4Fe-4S] cluster.

This sequence belongs to the UPF0313 family. Requires [4Fe-4S] cluster as cofactor.

This is UPF0313 protein CTN_0332 from Thermotoga neapolitana (strain ATCC 49049 / DSM 4359 / NBRC 107923 / NS-E).